We begin with the raw amino-acid sequence, 400 residues long: Dual specificity mitogen-activated protein kinase kinase 2 (400 aa).

An N-acetylmethionine modification is found at Met1. Ser23 bears the Phosphoserine mark. The Protein kinase domain maps to 72 to 369; it reads FERISELGAG…LKMLTNHTFI (298 aa). ATP is bound by residues 78-86 and Lys101; that span reads LGAGNGGVV. The Proton acceptor role is filled by Asp194. Residues Ser222 and Ser226 each carry the (Microbial infection) O-acetylserine; by Yersinia YopJ; alternate modification. Position 222 is a phosphoserine; by RAF; alternate (Ser222). At Ser226 the chain carries Phosphoserine; alternate. The disordered stretch occupies residues 286–310; the sequence is GEEGEPHSISPRPRPPGRPVSGHGM. Residues Ser293, Ser295, and Ser306 each carry the phosphoserine modification. Phosphothreonine is present on residues Thr394 and Thr396.

It belongs to the protein kinase superfamily. STE Ser/Thr protein kinase family. MAP kinase kinase subfamily. In terms of assembly, interacts with MORG1. Interacts with SGK1. Interacts with KSR1. Interacts with KSR1 and BRAF; the interaction with KSR1 mediates KSR1-BRAF dimerization. Interacts with GLS. It depends on Mg(2+) as a cofactor. Post-translationally, MAPKK is itself dependent on Ser/Thr phosphorylation for activity catalyzed by MAP kinase kinase kinases (RAF or MEKK1). Phosphorylated by MAP2K1/MEK1. (Microbial infection) Acetylation of Ser-222 and Ser-226 by Yersinia YopJ prevents phosphorylation and activation, thus blocking the MAPK signaling pathway.

It localises to the cytoplasm. Its subcellular location is the membrane. The catalysed reaction is L-seryl-[protein] + ATP = O-phospho-L-seryl-[protein] + ADP + H(+). It carries out the reaction L-threonyl-[protein] + ATP = O-phospho-L-threonyl-[protein] + ADP + H(+). The enzyme catalyses L-tyrosyl-[protein] + ATP = O-phospho-L-tyrosyl-[protein] + ADP + H(+). Functionally, catalyzes the concomitant phosphorylation of a threonine and a tyrosine residue in a Thr-Glu-Tyr sequence located in MAP kinases. Activates the ERK1 and ERK2 MAP kinases. Activates BRAF in a KSR1 or KSR2-dependent manner; by binding to KSR1 or KSR2 releases the inhibitory intramolecular interaction between KSR1 or KSR2 protein kinase and N-terminal domains which promotes KSR1 or KSR2-BRAF dimerization and BRAF activation. This is Dual specificity mitogen-activated protein kinase kinase 2 (MAP2K2) from Homo sapiens (Human).